A 371-amino-acid chain; its full sequence is MQTMDKQNLLESTRGARSFLGSLWKSEASRIPPVDLPAVELAVQSNHYCHAQKDSGSHPDPEKQRARRKLYVASAICLVFMIGEIIGGYLAQSLAIMTDAAHLLTDFASMLISLFALWVSSRPATKTMNFGWHRAEILGALLSVLSIWVVTGVLVYLAVQRLISGDYEIKGDTMLITSGCAVAVNLIMGLALHQSGHGHSHGNSRDDSSQQQNPSVRAAFIHVIGDLLQSVGVLVAAYIIYFKPEYKYVDPICTFLFSILVLGTTLTILRDVILVLMEGTPKGVDFTTVKNLLLSVDGVEALHSLHIWALTVAQPVLSVHIAIAQNADAQAVLKVARDRLQGKFNFHTMTIQIEKYSEDMKNCQACQGPLE.

Topologically, residues 1 to 69 are cytoplasmic; it reads MQTMDKQNLL…DPEKQRARRK (69 aa). The Mitochondrial localization signal motif lies at 47 to 50; the sequence is HYCH. Residue Cys49 coordinates Zn(2+). Residues 70–90 form a helical membrane-spanning segment; that stretch reads LYVASAICLVFMIGEIIGGYL. Residues 91–99 are Lumenal-facing; it reads AQSLAIMTD. Residues 100–120 form a helical membrane-spanning segment; it reads AAHLLTDFASMLISLFALWVS. Zn(2+) contacts are provided by His102 and Asp106. The Cytoplasmic segment spans residues 121-136; the sequence is SRPATKTMNFGWHRAE. Residues 137–157 form a helical membrane-spanning segment; sequence ILGALLSVLSIWVVTGVLVYL. Residues 158 to 172 are Lumenal-facing; it reads AVQRLISGDYEIKGD. Residues 173 to 193 form a helical membrane-spanning segment; the sequence is TMLITSGCAVAVNLIMGLALH. Residues 194-219 are Cytoplasmic-facing; it reads QSGHGHSHGNSRDDSSQQQNPSVRAA. Residues 220 to 240 traverse the membrane as a helical segment; it reads FIHVIGDLLQSVGVLVAAYII. Zn(2+)-binding residues include His222 and Asp226. The Lumenal segment spans residues 241–248; it reads YFKPEYKY. A helical transmembrane segment spans residues 249-269; that stretch reads VDPICTFLFSILVLGTTLTIL. Topologically, residues 270–303 are cytoplasmic; sequence RDVILVLMEGTPKGVDFTTVKNLLLSVDGVEALH. Residues 293 to 294 carry the Lysosomal targeting motif motif; the sequence is LL. Ser295 carries the post-translational modification Phosphoserine. Zn(2+)-binding residues include His303, His320, and Glu354. The helical transmembrane segment at 304–324 threads the bilayer; that stretch reads SLHIWALTVAQPVLSVHIAIA. Topologically, residues 325 to 371 are lumenal; that stretch reads QNADAQAVLKVARDRLQGKFNFHTMTIQIEKYSEDMKNCQACQGPLE.

The protein belongs to the cation diffusion facilitator (CDF) transporter (TC 2.A.4) family. SLC30A subfamily. Homodimer. Interacts (via lysosomal targeting motif) with AP3D1; in AP-3-mediated transport to lysosomes. Interacts with TMEM163. Phosphorylated at Ser-295. Phosphorylation at Ser-295 prevents localization to lysosomes. Dephosphorylation of Ser-295 which triggers localization to lysosomes, accumulation of zinc into lysosomes and lysosomal-mediated cell death is induced by TNF-alpha.

It localises to the cytoplasmic vesicle. Its subcellular location is the secretory vesicle membrane. The protein localises to the zymogen granule membrane. The protein resides in the endosome membrane. It is found in the lysosome membrane. It localises to the mitochondrion inner membrane. Its subcellular location is the cell membrane. It carries out the reaction Zn(2+)(in) + 2 H(+)(out) = Zn(2+)(out) + 2 H(+)(in). In terms of biological role, electroneutral proton-coupled antiporter concentrating zinc ions into a variety of intracellular organelles including endosomes, zymogen granules and mitochondria. Thereby, plays a crucial role in cellular zinc homeostasis to confer upon cells protection against its potential cytotoxicity. Regulates the zinc concentration of milk, through the transport of zinc ions into secretory vesicles of mammary cells. By concentrating zinc ions into lysosomes participates to lysosomal-mediated cell death during early mammary gland involution. Functionally, electroneutral proton-coupled antiporter mediating the efflux of zinc ions through the plasma membrane. The chain is Proton-coupled zinc antiporter SLC30A2 from Mus musculus (Mouse).